A 293-amino-acid chain; its full sequence is ATP synthase gamma chain (293 aa).

This sequence belongs to the ATPase gamma chain family. F-type ATPases have 2 components, CF(1) - the catalytic core - and CF(0) - the membrane proton channel. CF(1) has five subunits: alpha(3), beta(3), gamma(1), delta(1), epsilon(1). CF(0) has three main subunits: a, b and c.

Its subcellular location is the cell inner membrane. Produces ATP from ADP in the presence of a proton gradient across the membrane. The gamma chain is believed to be important in regulating ATPase activity and the flow of protons through the CF(0) complex. This is ATP synthase gamma chain from Psychrobacter cryohalolentis (strain ATCC BAA-1226 / DSM 17306 / VKM B-2378 / K5).